We begin with the raw amino-acid sequence, 187 residues long: Dihydrofolate reductase (187 aa).

Residues 4 to 185 enclose the DHFR domain; sequence PLNCIVAVSQ…IKYKFEVYEK (182 aa). Residues Ala-10 and 16–22 contribute to the NADP(+) site; that span reads GIGKNGD. 31-36 contributes to the substrate binding site; the sequence is EFQYFQ. 55-57 is an NADP(+) binding site; it reads RKT. Arg-71 contacts substrate. NADP(+)-binding positions include 77–79 and 117–124; these read SRE and GGSSVYKE.

The protein belongs to the dihydrofolate reductase family. In terms of assembly, homodimer.

The protein resides in the mitochondrion. It localises to the cytoplasm. It catalyses the reaction (6S)-5,6,7,8-tetrahydrofolate + NADP(+) = 7,8-dihydrofolate + NADPH + H(+). It functions in the pathway cofactor biosynthesis; tetrahydrofolate biosynthesis; 5,6,7,8-tetrahydrofolate from 7,8-dihydrofolate: step 1/1. In terms of biological role, key enzyme in folate metabolism. Contributes to the de novo mitochondrial thymidylate biosynthesis pathway. Catalyzes an essential reaction for de novo glycine and purine synthesis, and for DNA precursor synthesis. Binds its own mRNA and that of DHFR2. In Bos taurus (Bovine), this protein is Dihydrofolate reductase (DHFR).